Here is a 391-residue protein sequence, read N- to C-terminus: DNA repair protein NreB (391 aa).

The segment at 3–17 adopts a C4-type zinc-finger fold; it reads CIECRGRMLCSRKVC. Residues 384–391 carry the PIP motif motif; sequence QRTLWEFM.

This sequence belongs to the Nre family. As to quaternary structure, interacts with the DNA polymerase sliding clamp (PCNA) via the PIP (PCNA-interacting peptide) motif.

In terms of biological role, involved in DNA damage repair. This Archaeoglobus fulgidus (strain ATCC 49558 / DSM 4304 / JCM 9628 / NBRC 100126 / VC-16) protein is DNA repair protein NreB.